We begin with the raw amino-acid sequence, 237 residues long: uncharacterized protein (237 aa).

A Response regulatory domain is found at 3–116 (RILLVEDDER…VVMAKIKSVL (114 aa)). Asp52 is modified (4-aspartylphosphate). Residues 131-229 (SRIVELGGLT…IRGQGYQFQV (99 aa)) constitute a DNA-binding region (ompR/PhoB-type).

In terms of processing, phosphorylated by YvcQ.

The protein resides in the cytoplasm. Member of the two-component regulatory system YvcQ/YvcP. This is an uncharacterized protein from Bacillus subtilis (strain 168).